Consider the following 282-residue polypeptide: Pantothenate synthetase (282 aa).

30 to 37 contributes to the ATP binding site; it reads MGYLHEGH. Histidine 37 (proton donor) is an active-site residue. Glutamine 61 contributes to the (R)-pantoate binding site. Glutamine 61 serves as a coordination point for beta-alanine. 147 to 150 contributes to the ATP binding site; the sequence is GMKD. (R)-pantoate is bound at residue glutamine 153. Residues valine 176 and 184-187 contribute to the ATP site; that span reads KSSR.

Belongs to the pantothenate synthetase family. Homodimer.

Its subcellular location is the cytoplasm. It catalyses the reaction (R)-pantoate + beta-alanine + ATP = (R)-pantothenate + AMP + diphosphate + H(+). It functions in the pathway cofactor biosynthesis; (R)-pantothenate biosynthesis; (R)-pantothenate from (R)-pantoate and beta-alanine: step 1/1. In terms of biological role, catalyzes the condensation of pantoate with beta-alanine in an ATP-dependent reaction via a pantoyl-adenylate intermediate. The chain is Pantothenate synthetase from Bacillus cereus (strain B4264).